The primary structure comprises 271 residues: Phosphatidylglycerol--prolipoprotein diacylglyceryl transferase (271 aa).

4 helical membrane passes run 18-38 (LSVHWYGIIIGAGALLGLWMA), 51-71 (IFIDLVLFAIPIAIICARAYY), 89-109 (IWKGGIAIHGGLIGAIATGIV), and 115-135 (GISFWKLADIAAPSILLGQAI). Arg137 is a binding site for a 1,2-diacyl-sn-glycero-3-phospho-(1'-sn-glycerol). The next 3 helical transmembrane spans lie at 177–197 (HPTFLYESLWSFAGVVILLLL), 205–225 (GNLFLTYVIWYSIGRYFIEGM), and 236–256 (LRIAQVISIVLIVLAIILMIF).

It belongs to the Lgt family.

It localises to the cell membrane. It carries out the reaction L-cysteinyl-[prolipoprotein] + a 1,2-diacyl-sn-glycero-3-phospho-(1'-sn-glycerol) = an S-1,2-diacyl-sn-glyceryl-L-cysteinyl-[prolipoprotein] + sn-glycerol 1-phosphate + H(+). Its pathway is protein modification; lipoprotein biosynthesis (diacylglyceryl transfer). Functionally, catalyzes the transfer of the diacylglyceryl group from phosphatidylglycerol to the sulfhydryl group of the N-terminal cysteine of a prolipoprotein, the first step in the formation of mature lipoproteins. This chain is Phosphatidylglycerol--prolipoprotein diacylglyceryl transferase, found in Bacillus velezensis (strain DSM 23117 / BGSC 10A6 / LMG 26770 / FZB42) (Bacillus amyloliquefaciens subsp. plantarum).